We begin with the raw amino-acid sequence, 225 residues long: Urease subunit alpha (225 aa).

Residues 1 to 102 form a urease gamma region; it reads MRLTPKELDK…LVTIHNPIED (102 aa). The urease beta stretch occupies residues 103 to 225; the sequence is NGKLTPGEYI…ANAAQKHFIH (123 aa).

In the N-terminal section; belongs to the urease gamma subunit family. This sequence in the C-terminal section; belongs to the urease beta subunit family. Heterohexamer of 3 UreA (alpha) and 3 UreB (beta) subunits.

It localises to the cytoplasm. It carries out the reaction urea + 2 H2O + H(+) = hydrogencarbonate + 2 NH4(+). It functions in the pathway nitrogen metabolism; urea degradation; CO(2) and NH(3) from urea (urease route): step 1/1. The polypeptide is Urease subunit alpha (Helicobacter hepaticus (strain ATCC 51449 / 3B1)).